The chain runs to 92 residues: Phosphoribosyl-ATP pyrophosphatase (92 aa).

The protein belongs to the PRA-PH family.

It localises to the cytoplasm. It catalyses the reaction 1-(5-phospho-beta-D-ribosyl)-ATP + H2O = 1-(5-phospho-beta-D-ribosyl)-5'-AMP + diphosphate + H(+). It participates in amino-acid biosynthesis; L-histidine biosynthesis; L-histidine from 5-phospho-alpha-D-ribose 1-diphosphate: step 2/9. The protein is Phosphoribosyl-ATP pyrophosphatase of Leptospira borgpetersenii serovar Hardjo-bovis (strain JB197).